We begin with the raw amino-acid sequence, 506 residues long: Maturase K (506 aa).

This sequence belongs to the intron maturase 2 family. MatK subfamily.

The protein localises to the plastid. The protein resides in the chloroplast. In terms of biological role, usually encoded in the trnK tRNA gene intron. Probably assists in splicing its own and other chloroplast group II introns. The protein is Maturase K of Rhododendron tsusiophyllum (Rhododendron).